A 171-amino-acid polypeptide reads, in one-letter code: Myosin regulatory light chain 12A (171 aa).

T18 carries the post-translational modification Phosphothreonine; by MLCK. S19 bears the Phosphoserine; by MLCK mark. 3 consecutive EF-hand domains span residues 28–63 (SQIQEFKEAFNMIDQNRDGFIDKEDLHDMLASLGKN), 97–132 (DPEDVIRNAFACFDEEATGTIQEDYLRELLTTMGDR), and 133–168 (FTDEEVDELYREAPIDKKGNFNYIEFTRILKHGAKD). Residues D41, N43, D45, and D52 each coordinate Ca(2+).

In terms of assembly, myosin is a hexamer of 2 heavy chains and 4 light chains. In terms of processing, phosphorylation increases the actin-activated myosin ATPase activity and thereby regulates the contractile activity. It is required to generate the driving force in the migration of the cells but not necessary for localization of myosin-2 at the leading edge.

Myosin regulatory subunit that plays an important role in regulation of both smooth muscle and nonmuscle cell contractile activity via its phosphorylation. Implicated in cytokinesis, receptor capping, and cell locomotion. This is Myosin regulatory light chain 12A (MYL12A) from Homo sapiens (Human).